Here is a 506-residue protein sequence, read N- to C-terminus: Lysine--tRNA ligase (506 aa).

Mg(2+) contacts are provided by E416 and E423.

This sequence belongs to the class-II aminoacyl-tRNA synthetase family. Homodimer. Mg(2+) is required as a cofactor.

It localises to the cytoplasm. It carries out the reaction tRNA(Lys) + L-lysine + ATP = L-lysyl-tRNA(Lys) + AMP + diphosphate. This chain is Lysine--tRNA ligase, found in Pelotomaculum thermopropionicum (strain DSM 13744 / JCM 10971 / SI).